The chain runs to 908 residues: MELSVSSPKQSVLSPPDCMSDPEEEHEISEEEDDDRNHKHRRKEETRSQSLEQDSSDQAFSRPYRKNYRHYENGNSFSEHEKRSFGTGSGQRVQFDNQRMRSNPMFSRDSGPGRGRGNYGSWAQRDSRFNPVDLSSHMVQVGSMGQGMFGGRGLAGVSAAQSAPWPPFGMIPGVPNGGLDGFHHLQGSLRPPLNAPLNMGIPRQRCRDFEERGFCLRGDMCPMEHGMNRIVVDDVQSLSQFNLPVSVPGAPHLAASSKQVPAQFGGASFMNPKGAHGRTNEGGMAVDGLGYGDAYPSAGGTDFYDPDQPLWNNSTGETSGAISTLNSHGVDENVAPLDDSNQDAAENGCGIRDSRSTSQSVWGRMKGSNSQANSKEKADAVLNSSAVPEDQLKEVSVNSSRHGKQNHVGESVAKVVDSSNISNDMMNNTRKPTQKAMRTLFVNYVPHESNRRDLILAHFQKFGKVIDIHIPVNSERAFVQFSKREEAESALRAPDAVMGNRFIKLWWANRDSIPDNGLSTGSGASMKGRSMTASGAQNQFPIAAASKSNHVSSIAKVPTFQTGGAPSSSEQPKPVVVTTSGPKVTPLQQKKADTLERLKETLRKKQEMLEQKRNEYRKKLATLEKQGTVVKREEADEPDAKRVKLDTASDSGAAIASPKTESSTDKKVPILKPLSTAKLSTETPSPDSKNFKQRPYSFTTSLNAPMVNRYKLDNRTTTIKVVPPLPTGLADVAVVKEHFSSYGEVSKVELEDNASIDSGKDHETQNESRAACVTFVKRSAAEKAFANAKCWQEHTLQLVWVTRQSNRESNNNNNNSNSLSVSRDNLSSKNKCASVSNDPKPAVEVKTSSTEEPENTNVSGDNDSTLDKQETKESDNDNNKSNHESIEGASEVIATAGTDEEQSEQIHQ.

Over residues 1–13 the composition is skewed to polar residues; the sequence is MELSVSSPKQSVL. The segment at 1–124 is disordered; sequence MELSVSSPKQ…GRGNYGSWAQ (124 aa). A compositionally biased stretch (acidic residues) spans 20-34; that stretch reads SDPEEEHEISEEEDD. Composition is skewed to polar residues over residues 48–59 and 90–105; these read SQSLEQDSSDQA and GQRV…SNPM. A C3H1-type zinc finger spans residues 200–228; it reads GIPRQRCRDFEERGFCLRGDMCPMEHGMN. The tract at residues 333–375 is disordered; it reads NVAPLDDSNQDAAENGCGIRDSRSTSQSVWGRMKGSNSQANSK. A compositionally biased stretch (polar residues) spans 356–373; it reads STSQSVWGRMKGSNSQAN. Positions 438-510 constitute an RRM domain; that stretch reads RTLFVNYVPH…RFIKLWWANR (73 aa). Disordered stretches follow at residues 558 to 590, 629 to 695, and 807 to 908; these read PTFQ…LQQK, VVKR…KQRP, and RESN…QIHQ. Positions 559–588 are enriched in polar residues; it reads TFQTGGAPSSSEQPKPVVVTTSGPKVTPLQ. A coiled-coil region spans residues 587 to 630; sequence LQQKKADTLERLKETLRKKQEMLEQKRNEYRKKLATLEKQGTVV. Residues 630-647 are compositionally biased toward basic and acidic residues; sequence VKREEADEPDAKRVKLDT. Position 657 is a phosphoserine (Ser-657). Residues 677–688 show a composition bias toward polar residues; the sequence is AKLSTETPSPDS. The span at 807-828 shows a compositional bias: low complexity; the sequence is RESNNNNNNSNSLSVSRDNLSS. The segment covering 846-863 has biased composition (polar residues); the sequence is KTSSTEEPENTNVSGDND. Over residues 865–886 the composition is skewed to basic and acidic residues; it reads TLDKQETKESDNDNNKSNHESI. A compositionally biased stretch (acidic residues) spans 898 to 908; it reads TDEEQSEQIHQ.

The sequence is that of Zinc finger CCCH domain-containing protein 41 from Arabidopsis thaliana (Mouse-ear cress).